Here is a 323-residue protein sequence, read N- to C-terminus: Small ribosomal subunit protein uS9m (323 aa).

The disordered stretch occupies residues 298 to 323 (TRDARKVERKKPGKVKARKSPTWVKR). Positions 304–323 (VERKKPGKVKARKSPTWVKR) are enriched in basic residues.

This sequence belongs to the universal ribosomal protein uS9 family.

It is found in the mitochondrion. The protein is Small ribosomal subunit protein uS9m (MRPS9) of Debaryomyces hansenii (strain ATCC 36239 / CBS 767 / BCRC 21394 / JCM 1990 / NBRC 0083 / IGC 2968) (Yeast).